Consider the following 89-residue polypeptide: uncharacterized protein (89 aa).

This is an uncharacterized protein from Schizosaccharomyces pombe (strain 972 / ATCC 24843) (Fission yeast).